The sequence spans 88 residues: Large ribosomal subunit protein bL27 (88 aa).

Residues 1-24 (MATKKSGGSSGNGRDSRGRRLGVK) are disordered.

It belongs to the bacterial ribosomal protein bL27 family.

The chain is Large ribosomal subunit protein bL27 from Ehrlichia canis (strain Jake).